The primary structure comprises 326 residues: Pyruvate dehydrogenase E1 component subunit alpha (326 aa).

Heterodimer of an alpha and a beta chain. Requires thiamine diphosphate as cofactor.

It catalyses the reaction N(6)-[(R)-lipoyl]-L-lysyl-[protein] + pyruvate + H(+) = N(6)-[(R)-S(8)-acetyldihydrolipoyl]-L-lysyl-[protein] + CO2. The pyruvate dehydrogenase complex catalyzes the overall conversion of pyruvate to acetyl-CoA and CO(2). It contains multiple copies of three enzymatic components: pyruvate dehydrogenase (E1), dihydrolipoamide acetyltransferase (E2) and lipoamide dehydrogenase (E3). The protein is Pyruvate dehydrogenase E1 component subunit alpha (pdhA) of Rickettsia prowazekii (strain Madrid E).